Here is a 358-residue protein sequence, read N- to C-terminus: MATH domain and coiled-coil domain-containing protein At3g58440 (358 aa).

The MATH domain maps to 8–131; the sequence is QDKFTWVLEK…NDRLTIVAEV (124 aa). Positions 250 to 309 form a coiled coil; sequence LRDAGFKVDWLEKKLDQLKEKKEEEMSGLARLHEIEERLQKLKLLFVDLESQLQKEKVEA.

The polypeptide is MATH domain and coiled-coil domain-containing protein At3g58440 (Arabidopsis thaliana (Mouse-ear cress)).